We begin with the raw amino-acid sequence, 97 residues long: Large ribosomal subunit protein eL21 (97 aa).

Over residues methionine 1–arginine 12 the composition is skewed to polar residues. The interval methionine 1–aspartate 35 is disordered.

This sequence belongs to the eukaryotic ribosomal protein eL21 family.

The polypeptide is Large ribosomal subunit protein eL21 (Natronomonas pharaonis (strain ATCC 35678 / DSM 2160 / CIP 103997 / JCM 8858 / NBRC 14720 / NCIMB 2260 / Gabara) (Halobacterium pharaonis)).